A 685-amino-acid chain; its full sequence is Stromal interaction molecule 1 (685 aa).

The N-terminal stretch at 1-22 (MDVCVRLALWLLWGLLLHQGQS) is a signal peptide. Topologically, residues 23-213 (LSHSHSEKAT…LLTRHNHLKD (191 aa)) are extracellular. EF-hand domains lie at 64–97 (SFEAVRNIHKLMDDDANGDVDVEESDEFLREDLN) and 102–126 (TVKHSTFHGEDKLISVEDLWKAWKS). Residues Asp76, Asp78, Asn80, Asp82, and Glu87 each contribute to the Ca(2+) site. Residues Asn131 and Asn171 are each glycosylated (N-linked (GlcNAc...) asparagine). The SAM domain occupies 132–200 (WTVDEVVQWL…QLKALDTVLF (69 aa)). The helical transmembrane segment at 214–234 (FMLVVSIVIGVGGCWFAYIQN) threads the bilayer. Residues 235–685 (RYSKEHMKKM…LKIFKKPLKK (451 aa)) are Cytoplasmic-facing. Residues 248 to 442 (LEGLHRAEQS…IEILCGFQIV (195 aa)) adopt a coiled-coil conformation. Ser257 carries the post-translational modification Phosphoserine. An SOAR/CAD region spans residues 344 to 442 (PEALQKWLQL…IEILCGFQIV (99 aa)). A contributes to fast Ca(2+)-dependent inactivation of CRAC channels region spans residues 475–483 (DDVDDMDEE). Residues 490 to 499 (MQSPSLQSSV) are compositionally biased toward low complexity. A disordered region spans residues 490-542 (MQSPSLQSSVRQRLTEPQHGLGSQRDLTHSDSESSLHMSDRQRVAPKPPQMSR). Thr504 bears the Phosphothreonine mark. The residue at position 512 (Ser512) is a Phosphoserine. Residues 515–532 (DLTHSDSESSLHMSDRQR) are compositionally biased toward basic and acidic residues. Thr517 carries the post-translational modification Phosphothreonine. A phosphoserine mark is found at Ser519, Ser521, Ser523, Ser524, Ser567, Ser575, Ser602, Ser608, Ser618, Ser621, and Ser628. The segment at 596-685 (LMELSPSAPP…LKIFKKPLKK (90 aa)) is disordered. Low complexity predominate over residues 608–620 (SPHLDSSRSHSPS). The Microtubule tip localization signal motif lies at 642–645 (TRIP). Over residues 655–666 (EEDNGSIGEETD) the composition is skewed to acidic residues. Position 660 is a phosphoserine (Ser660). Residue Thr665 is modified to Phosphothreonine. Phosphoserine is present on Ser668. Residues 670-685 (GRKKFPLKIFKKPLKK) are compositionally biased toward basic residues. The tract at residues 672-685 (KKFPLKIFKKPLKK) is required for generation of inwardly rectifying CRAC currents.

Monomer in the presence of Ca(2+); it oligomerizes in absence of Ca(2+). Forms homooligomers and heterooligomers with STIM2. Interacts with pore-forming subunits of CRAC channels, ORAI1, ORAI2 and ORAI3; this interaction is potentiated upon Ca(2+) store depletion. Interacts (via the transmembrane region and the SOAR/CAD domain) with SPPL3; the interaction promotes the binding of STIM1 to ORAI1. Interacts (via the SOAR/CAD domain) with ORAI1. Interacts with MAPRE1; probably required for targeting to the growing microtubule plus ends. Interacts with CRACR2A/EFCAB4B; the interaction is direct and takes place in absence of Ca(2+). Forms a complex with CRACR2A/EFCAB4B and ORAI1 at low concentration of Ca(2+), the complex dissociates at elevated Ca(2+) concentrations. Interacts with SARAF, promoting a slow inactivation of STIM1-dependent SOCE activity, possibly by facilitating the deoligomerization of STIM1. Interacts with EFHB; the interaction takes place upon Ca(2+)-store depletion and inhibits the association with SARAF. Interacts with ASPH (isoform 8). Interacts with SLC35G1; intracellular Ca(2+)-dependent. May interact with ATP1A1, ATP2A2, ATP2B1, ATP2B4, KPNB1 and XPO1; through SLC35G1. Interacts with TMEM203. Interacts with STIMATE, promoting STIM1 conformational switch. Interacts with TMEM178A. Interacts with CASQ1 (via C-terminal end and preferentially with the monomeric form); this interaction increases in response to a depletion of intracellular Ca(2+), decreases both STIM1 aggregation and clustering, interaction of STIM1 with ORAI1 and store-operated Ca(2+) entry (SOCE) activity. Interacts with ADCY8. Glycosylation is required for cell surface expression. Post-translationally, phosphorylated predominantly on Ser residues. Ubiquitously expressed in various human primary cells and tumor cell lines.

Its subcellular location is the cell membrane. It is found in the endoplasmic reticulum membrane. It localises to the cytoplasm. The protein localises to the cytoskeleton. The protein resides in the sarcoplasmic reticulum. In terms of biological role, acts as a Ca(2+) sensor that gates two major inward rectifying Ca(2+) channels at the plasma membrane: Ca(2+) release-activated Ca(2+) (CRAC) channels and arachidonate-regulated Ca(2+)-selective (ARC) channels. Plays a role in mediating store-operated Ca(2+) entry (SOCE), a Ca(2+) influx following depletion of intracellular Ca(2+) stores. Upon Ca(2+) depletion, translocates from the endoplasmic reticulum to the plasma membrane where it activates CRAC channel pore-forming subunits ORA1, ORA2 and ORAI3 to generate sustained and oscillatory Ca(2+) entry. Involved in enamel formation. This chain is Stromal interaction molecule 1 (STIM1), found in Homo sapiens (Human).